We begin with the raw amino-acid sequence, 102 residues long: Acid shock protein (102 aa).

Residues 1–21 (MKKVLGLVVAAAMGLSSAAFA) form the signal peptide. Residues 22–41 (AETATTPAPTATTTKAAPAK) are compositionally biased toward low complexity. Residues 22–58 (AETATTPAPTATTTKAAPAKTTHHKKQHKAAPAQKAQ) constitute a propeptide that is removed on maturation. The disordered stretch occupies residues 22 to 102 (AETATTPAPT…PAKPAAQPAA (81 aa)). Over residues 80–90 (AAKKHAGKHSH) the composition is skewed to basic residues. Over residues 91–102 (QQPAKPAAQPAA) the composition is skewed to low complexity.

It belongs to the Asr family. Proteolytic processing gives rise to the active protein.

The protein resides in the periplasm. Required for growth and/or survival at acidic conditions. This Escherichia coli (strain SE11) protein is Acid shock protein.